Reading from the N-terminus, the 558-residue chain is Inositol-3-phosphate synthase (558 aa).

The segment at 1–34 (MSPTALDACDHHDSFSLPAQDQSKVHPSARRTPE) is disordered. NAD(+) contacts are provided by glycine 99, glycine 100, asparagine 101, asparagine 102, aspartate 174, serine 210, isoleucine 211, glutamine 221, arginine 224, threonine 262, alanine 263, asparagine 264, threonine 265, glycine 313, serine 314, aspartate 338, serine 341, asparagine 372, asparagine 373, aspartate 374, lysine 387, glycine 439, aspartate 440, aspartate 468, and serine 469.

This sequence belongs to the myo-inositol 1-phosphate synthase family. As to quaternary structure, homotetramer. The cofactor is NAD(+).

The protein localises to the cytoplasm. The enzyme catalyses D-glucose 6-phosphate = 1D-myo-inositol 3-phosphate. It participates in polyol metabolism; myo-inositol biosynthesis; myo-inositol from D-glucose 6-phosphate: step 1/2. Its function is as follows. Key enzyme in myo-inositol biosynthesis pathway that catalyzes the conversion of glucose 6-phosphate to 1-myo-inositol 1-phosphate in a NAD-dependent manner. Rate-limiting enzyme in the synthesis of all inositol-containing compounds. This Cryptococcus neoformans var. grubii serotype A (strain H99 / ATCC 208821 / CBS 10515 / FGSC 9487) (Filobasidiella neoformans var. grubii) protein is Inositol-3-phosphate synthase.